The sequence spans 174 residues: Small ribosomal subunit protein uS5 (174 aa).

The S5 DRBM domain maps to 18–81 (LKDRLVSVNR…EDAKKNLVKI (64 aa)).

It belongs to the universal ribosomal protein uS5 family. As to quaternary structure, part of the 30S ribosomal subunit. Contacts proteins S4 and S8.

Its function is as follows. With S4 and S12 plays an important role in translational accuracy. In terms of biological role, located at the back of the 30S subunit body where it stabilizes the conformation of the head with respect to the body. This chain is Small ribosomal subunit protein uS5, found in Flavobacterium psychrophilum (strain ATCC 49511 / DSM 21280 / CIP 103535 / JIP02/86).